The chain runs to 1085 residues: Carbamoyl phosphate synthase large chain (1085 aa).

Positions 1 to 399 (MPKRTDISNI…ALQKALCSLE (399 aa)) are carboxyphosphate synthetic domain. ATP is bound by residues R127, R167, G174, E206, L208, E213, G239, V240, H241, Q283, and E297. One can recognise an ATP-grasp 1 domain in the interval 131 to 326 (KEAMLKIGMD…IAKVATMLAV (196 aa)). Q283, E297, and N299 together coordinate Mg(2+). Mn(2+) contacts are provided by Q283, E297, and N299. The oligomerization domain stretch occupies residues 400-551 (NNWLGFESLS…YAPNPLPPIG (152 aa)). The segment at 552–951 (NKQEKQEKKI…AFFKAQTACF (400 aa)) is carbamoyl phosphate synthetic domain. An ATP-grasp 2 domain is found at 678 to 871 (SLFLKELDIK…LAKVATRVMV (194 aa)). Residues R714, K756, L758, E763, G788, I789, H790, S791, Q830, and E842 each coordinate ATP. Mg(2+)-binding residues include Q830, E842, and N844. 3 residues coordinate Mn(2+): Q830, E842, and N844. Residues 952–1085 (NPIKNKGLIF…ELLALQDYLK (134 aa)) enclose the MGS-like domain. Residues 952 to 1085 (NPIKNKGLIF…ELLALQDYLK (134 aa)) are allosteric domain.

The protein belongs to the CarB family. In terms of assembly, composed of two chains; the small (or glutamine) chain promotes the hydrolysis of glutamine to ammonia, which is used by the large (or ammonia) chain to synthesize carbamoyl phosphate. Tetramer of heterodimers (alpha,beta)4. Mg(2+) serves as cofactor. The cofactor is Mn(2+).

The catalysed reaction is hydrogencarbonate + L-glutamine + 2 ATP + H2O = carbamoyl phosphate + L-glutamate + 2 ADP + phosphate + 2 H(+). It carries out the reaction hydrogencarbonate + NH4(+) + 2 ATP = carbamoyl phosphate + 2 ADP + phosphate + 2 H(+). It participates in amino-acid biosynthesis; L-arginine biosynthesis; carbamoyl phosphate from bicarbonate: step 1/1. The protein operates within pyrimidine metabolism; UMP biosynthesis via de novo pathway; (S)-dihydroorotate from bicarbonate: step 1/3. In terms of biological role, large subunit of the glutamine-dependent carbamoyl phosphate synthetase (CPSase). CPSase catalyzes the formation of carbamoyl phosphate from the ammonia moiety of glutamine, carbonate, and phosphate donated by ATP, constituting the first step of 2 biosynthetic pathways, one leading to arginine and/or urea and the other to pyrimidine nucleotides. The large subunit (synthetase) binds the substrates ammonia (free or transferred from glutamine from the small subunit), hydrogencarbonate and ATP and carries out an ATP-coupled ligase reaction, activating hydrogencarbonate by forming carboxy phosphate which reacts with ammonia to form carbamoyl phosphate. The polypeptide is Carbamoyl phosphate synthase large chain (Helicobacter pylori (strain J99 / ATCC 700824) (Campylobacter pylori J99)).